A 412-amino-acid chain; its full sequence is Imidazolonepropionase (412 aa).

Positions 76 and 78 each coordinate Fe(3+). Residues His-76 and His-78 each contribute to the Zn(2+) site. 3 residues coordinate 4-imidazolone-5-propanoate: Arg-85, Tyr-148, and His-181. Residue Tyr-148 participates in N-formimidoyl-L-glutamate binding. Fe(3+) is bound at residue His-242. His-242 lines the Zn(2+) pocket. Glu-245 contributes to the 4-imidazolone-5-propanoate binding site. Residue Asp-317 coordinates Fe(3+). Residue Asp-317 coordinates Zn(2+). Residues Asn-319 and Gly-321 each contribute to the N-formimidoyl-L-glutamate site. Residue Ser-322 coordinates 4-imidazolone-5-propanoate.

The protein belongs to the metallo-dependent hydrolases superfamily. HutI family. Requires Zn(2+) as cofactor. Fe(3+) serves as cofactor.

It localises to the cytoplasm. The enzyme catalyses 4-imidazolone-5-propanoate + H2O = N-formimidoyl-L-glutamate. The protein operates within amino-acid degradation; L-histidine degradation into L-glutamate; N-formimidoyl-L-glutamate from L-histidine: step 3/3. In terms of biological role, catalyzes the hydrolytic cleavage of the carbon-nitrogen bond in imidazolone-5-propanoate to yield N-formimidoyl-L-glutamate. It is the third step in the universal histidine degradation pathway. This Staphylococcus aureus (strain MSSA476) protein is Imidazolonepropionase.